A 217-amino-acid chain; its full sequence is Large ribosomal subunit protein uL3 (217 aa).

A disordered region spans residues 127-162 (GFSRGPMSHGSKNHRAPGSTGAGTTPGRIYPGKRMA). Low complexity predominate over residues 142–153 (APGSTGAGTTPG).

The protein belongs to the universal ribosomal protein uL3 family. In terms of assembly, part of the 50S ribosomal subunit. Forms a cluster with proteins L14 and L19.

Functionally, one of the primary rRNA binding proteins, it binds directly near the 3'-end of the 23S rRNA, where it nucleates assembly of the 50S subunit. This Prochlorococcus marinus (strain AS9601) protein is Large ribosomal subunit protein uL3.